A 381-amino-acid polypeptide reads, in one-letter code: Ceropsin (381 aa).

The Extracellular portion of the chain corresponds to 1–62 (MSISMDAGPG…MNPLWHALLG (62 aa)). A glycan (N-linked (GlcNAc...) asparagine) is linked at N28. The chain crosses the membrane as a helical span at residues 63-83 (FTIGVLGFISMMGNGMVIYIF). Residues 84 to 96 (MTTKNLKTPSNLL) are Cytoplasmic-facing. A helical membrane pass occupies residues 97–117 (VVNLAFSDFLMMCAMSPAMVI). Residues 118-133 (NCYNETWVFGPFACEL) lie on the Extracellular side of the membrane. A glycan (N-linked (GlcNAc...) asparagine) is linked at N121. C131 and C208 are joined by a disulfide. A helical membrane pass occupies residues 134–154 (YGCAGSLFGCASIWTMTMIAF). Residues 155–173 (DRYNVIVKGIAAKPMTNNG) are Cytoplasmic-facing. The chain crosses the membrane as a helical span at residues 174 to 194 (ALLRILGIWAFSLAWTVAPFF). Residues 195–221 (GWNRYVPEGNMTACGTDYLTKDWFSRS) lie on the Extracellular side of the membrane. N204 carries an N-linked (GlcNAc...) asparagine glycan. The helical transmembrane segment at 222–242 (YIVVYSVFVYFAPLLLIVYSY) threads the bilayer. Residues 243 to 284 (YYIVQAVSAHEKAMREQAKKMNVASLRSSEAANTSTECKLAK) are Cytoplasmic-facing. Residues 285 to 305 (VALMTISLWFMAWTPYLVINY) form a helical membrane-spanning segment. The Extracellular segment spans residues 306 to 316 (TGILESAPISP). A helical transmembrane segment spans residues 317 to 339 (LATIWGSLFAKANAVYNPIVYGI). Topologically, residues 340–381 (SHPKYQAALYKRFPVLQCHSTTTDEASSVASGTTVMEEKPTA) are cytoplasmic.

It belongs to the G-protein coupled receptor 1 family. Opsin subfamily. As to expression, expressed bilaterally in dorsal and ventral anterior protocerebral cells and bilaterally in the dorsal posterior protocerebral and lateral posterior tritocerebral cells (at protein level). Expressed in the larval brain but not in the subesophageal ganglion or thoracic ganglion.

It is found in the membrane. In terms of biological role, visual pigments are the light-absorbing molecules that mediate vision. They consist of an apoprotein, opsin, covalently linked to cis-retinal. May play a role in photoperiodic photoreception. The polypeptide is Ceropsin (Bombyx mori (Silk moth)).